A 374-amino-acid polypeptide reads, in one-letter code: MSDNSQKKVIVGMSGGVDSSVSAYLLKQQGYQVEGLFMKNWEEDDNEEYCTAAEDLADAQAVCDKLGIHLHTINFAAEYWDNVFEYFLAEYKAGRTPNPDILCNKEIKFKAFLEFADEVLEADYIAMGHYVRRSFPENGEKPQMLRGLDSNKDQSYFLYTLSHEQVARSLFPVGDLEKPEVRRIAEEQGLITAKKKDSTGICFIGERKFTEFLGRYLPAQPGNIETPEGEVIGQHQGLMYHTLGQRKGLHIGGRKGGGGNEDPWFVGEKDLDRNVLIAVQGKDHPMLKSEGLLASQLHWVDREPIRDVMKCTVKTRYRQQDIPCTIIPIDDENIKVIFDEPQIAVTPGQSAVFYKDDVCLGGGIIEQRIKYSQA.

ATP contacts are provided by residues 12 to 19 and Met-38; that span reads GMSGGVDS. Positions 98-100 are interaction with target base in tRNA; that stretch reads NPD. Cys-103 serves as the catalytic Nucleophile. Cysteines 103 and 202 form a disulfide. Gly-128 is an ATP binding site. Residues 152-154 are interaction with tRNA; sequence KDQ. Residue Cys-202 is the Cysteine persulfide intermediate of the active site. Residues 316-317 are interaction with tRNA; it reads RY.

The protein belongs to the MnmA/TRMU family.

Its subcellular location is the cytoplasm. It carries out the reaction S-sulfanyl-L-cysteinyl-[protein] + uridine(34) in tRNA + AH2 + ATP = 2-thiouridine(34) in tRNA + L-cysteinyl-[protein] + A + AMP + diphosphate + H(+). Catalyzes the 2-thiolation of uridine at the wobble position (U34) of tRNA, leading to the formation of s(2)U34. The polypeptide is tRNA-specific 2-thiouridylase MnmA (Vibrio parahaemolyticus serotype O3:K6 (strain RIMD 2210633)).